The chain runs to 51 residues: Large ribosomal subunit protein eL39 (51 aa).

Belongs to the eukaryotic ribosomal protein eL39 family.

The protein is Large ribosomal subunit protein eL39 of Pyrobaculum neutrophilum (strain DSM 2338 / JCM 9278 / NBRC 100436 / V24Sta) (Thermoproteus neutrophilus).